The sequence spans 594 residues: Isocitrate dehydrogenase kinase/phosphatase (594 aa).

ATP contacts are provided by residues 315–321 and K336; that span reads APGIRGM. The active site involves D371.

It belongs to the AceK family.

The protein localises to the cytoplasm. It catalyses the reaction L-seryl-[isocitrate dehydrogenase] + ATP = O-phospho-L-seryl-[isocitrate dehydrogenase] + ADP + H(+). Bifunctional enzyme which can phosphorylate or dephosphorylate isocitrate dehydrogenase (IDH) on a specific serine residue. This is a regulatory mechanism which enables bacteria to bypass the Krebs cycle via the glyoxylate shunt in response to the source of carbon. When bacteria are grown on glucose, IDH is fully active and unphosphorylated, but when grown on acetate or ethanol, the activity of IDH declines drastically concomitant with its phosphorylation. The chain is Isocitrate dehydrogenase kinase/phosphatase from Klebsiella pneumoniae subsp. pneumoniae (strain ATCC 700721 / MGH 78578).